Consider the following 207-residue polypeptide: Thiamine-phosphate synthase (207 aa).

4-amino-2-methyl-5-(diphosphooxymethyl)pyrimidine-binding positions include 35–39 (QYRDK) and Asn67. Residues Asp68 and Asp86 each contribute to the Mg(2+) site. Thr105 serves as a coordination point for 4-amino-2-methyl-5-(diphosphooxymethyl)pyrimidine. 132–134 (SNT) serves as a coordination point for 2-[(2R,5Z)-2-carboxy-4-methylthiazol-5(2H)-ylidene]ethyl phosphate. Lys135 is a binding site for 4-amino-2-methyl-5-(diphosphooxymethyl)pyrimidine. Gly162 contacts 2-[(2R,5Z)-2-carboxy-4-methylthiazol-5(2H)-ylidene]ethyl phosphate.

It belongs to the thiamine-phosphate synthase family. Requires Mg(2+) as cofactor.

It catalyses the reaction 2-[(2R,5Z)-2-carboxy-4-methylthiazol-5(2H)-ylidene]ethyl phosphate + 4-amino-2-methyl-5-(diphosphooxymethyl)pyrimidine + 2 H(+) = thiamine phosphate + CO2 + diphosphate. It carries out the reaction 2-(2-carboxy-4-methylthiazol-5-yl)ethyl phosphate + 4-amino-2-methyl-5-(diphosphooxymethyl)pyrimidine + 2 H(+) = thiamine phosphate + CO2 + diphosphate. The catalysed reaction is 4-methyl-5-(2-phosphooxyethyl)-thiazole + 4-amino-2-methyl-5-(diphosphooxymethyl)pyrimidine + H(+) = thiamine phosphate + diphosphate. Its pathway is cofactor biosynthesis; thiamine diphosphate biosynthesis; thiamine phosphate from 4-amino-2-methyl-5-diphosphomethylpyrimidine and 4-methyl-5-(2-phosphoethyl)-thiazole: step 1/1. In terms of biological role, condenses 4-methyl-5-(beta-hydroxyethyl)thiazole monophosphate (THZ-P) and 2-methyl-4-amino-5-hydroxymethyl pyrimidine pyrophosphate (HMP-PP) to form thiamine monophosphate (TMP). In Pseudomonas fluorescens (strain Pf0-1), this protein is Thiamine-phosphate synthase.